The sequence spans 382 residues: Sulfate adenylyltransferase (382 aa).

Belongs to the sulfate adenylyltransferase family.

It carries out the reaction sulfate + ATP + H(+) = adenosine 5'-phosphosulfate + diphosphate. The protein operates within sulfur metabolism; hydrogen sulfide biosynthesis; sulfite from sulfate: step 1/3. This is Sulfate adenylyltransferase from Ignicoccus hospitalis (strain KIN4/I / DSM 18386 / JCM 14125).